The chain runs to 1050 residues: Sucrose-phosphate synthase 4 (1050 aa).

The segment at glutamine 134–threonine 167 is disordered. Serine 148 carries the post-translational modification Phosphoserine. Positions glutamate 149–glutamate 163 are enriched in basic and acidic residues. Phosphoserine is present on serine 180.

The protein belongs to the glycosyltransferase 1 family. As to quaternary structure, homodimer or homotetramer.

It catalyses the reaction beta-D-fructose 6-phosphate + UDP-alpha-D-glucose = sucrose 6(F)-phosphate + UDP + H(+). It functions in the pathway glycan biosynthesis; sucrose biosynthesis; sucrose from D-fructose 6-phosphate and UDP-alpha-D-glucose: step 1/2. Activity is regulated by phosphorylation and moderated by concentration of metabolites and light. Its function is as follows. Plays a role in photosynthetic sucrose synthesis by catalyzing the rate-limiting step of sucrose biosynthesis from UDP-glucose and fructose- 6-phosphate. Involved in the regulation of carbon partitioning in the leaves of plants. May regulate the synthesis of sucrose and therefore play a major role as a limiting factor in the export of photoassimilates out of the leaf. Plays a role for sucrose availability that is essential for plant growth and fiber elongation. In Arabidopsis thaliana (Mouse-ear cress), this protein is Sucrose-phosphate synthase 4.